A 295-amino-acid chain; its full sequence is Pyridoxal 5'-phosphate synthase subunit PdxS (295 aa).

Asp-25 is a D-ribose 5-phosphate binding site. Catalysis depends on Lys-82, which acts as the Schiff-base intermediate with D-ribose 5-phosphate. Gly-154 provides a ligand contact to D-ribose 5-phosphate. Residue Arg-166 coordinates D-glyceraldehyde 3-phosphate. D-ribose 5-phosphate is bound by residues Gly-215 and 236 to 237 (GS).

The protein belongs to the PdxS/SNZ family. In the presence of PdxT, forms a dodecamer of heterodimers.

It catalyses the reaction aldehydo-D-ribose 5-phosphate + D-glyceraldehyde 3-phosphate + L-glutamine = pyridoxal 5'-phosphate + L-glutamate + phosphate + 3 H2O + H(+). The protein operates within cofactor biosynthesis; pyridoxal 5'-phosphate biosynthesis. In terms of biological role, catalyzes the formation of pyridoxal 5'-phosphate from ribose 5-phosphate (RBP), glyceraldehyde 3-phosphate (G3P) and ammonia. The ammonia is provided by the PdxT subunit. Can also use ribulose 5-phosphate and dihydroxyacetone phosphate as substrates, resulting from enzyme-catalyzed isomerization of RBP and G3P, respectively. The chain is Pyridoxal 5'-phosphate synthase subunit PdxS from Listeria innocua serovar 6a (strain ATCC BAA-680 / CLIP 11262).